The primary structure comprises 75 residues: Small ribosomal subunit protein bS18 (75 aa).

It belongs to the bacterial ribosomal protein bS18 family. As to quaternary structure, part of the 30S ribosomal subunit. Forms a tight heterodimer with protein bS6.

In terms of biological role, binds as a heterodimer with protein bS6 to the central domain of the 16S rRNA, where it helps stabilize the platform of the 30S subunit. The protein is Small ribosomal subunit protein bS18 of Teredinibacter turnerae (strain ATCC 39867 / T7901).